The chain runs to 492 residues: MKQKCVLIITDGIGYNKNSKFNAFEAAKKPSYEKLFKEVPNSLLKTSGLAVGLPEGQMGNSEVGHMCIGSGRIIYQNLVRINKAIENKELEKNENLKKLLAKCKRVHIIGLYSDGGVHSMDTHFKAMLEICAKNGNEVFAHAITDGRDVSPKSGLNFIKDLKEFCENLGVHFATLCGRFYAMDRDKRWDRVKEYYECLLGKAYKVPNLLEYLQKSYDENVTDEFIKAAQNENYKGMREEDGIIFINFRNDRMKQLVEVLNSKDFKEFEREKIFENLLTMSVYDDKFKLPVLFEKEKIENTLAQVISKAGLSQLHTAETEKYAHVTFFFNGGKEELLENETRVLIPSPKVKTYDEKPQMSAFEVCDAVKKGIEKGEDFIVVNFANGDMVGHTGDFNATIKAVEAVDTCLGEILECAKKHDYAFIITSDHGNCEAMQDEKGNLLTNHTTFDVFVFVQARGVSKIKDNMGLSNIAASVLKILDLEIPKEMNEALF.

2 residues coordinate Mn(2+): aspartate 11 and serine 61. Serine 61 serves as the catalytic Phosphoserine intermediate. Residues histidine 118, 147-148, arginine 178, arginine 184, 248-251, and lysine 320 each bind substrate; these read RD and RNDR. Residues aspartate 386, histidine 390, aspartate 427, histidine 428, and histidine 445 each coordinate Mn(2+).

It belongs to the BPG-independent phosphoglycerate mutase family. Monomer. Mn(2+) is required as a cofactor.

The catalysed reaction is (2R)-2-phosphoglycerate = (2R)-3-phosphoglycerate. It functions in the pathway carbohydrate degradation; glycolysis; pyruvate from D-glyceraldehyde 3-phosphate: step 3/5. Its function is as follows. Catalyzes the interconversion of 2-phosphoglycerate and 3-phosphoglycerate. The polypeptide is 2,3-bisphosphoglycerate-independent phosphoglycerate mutase (Campylobacter jejuni subsp. jejuni serotype O:2 (strain ATCC 700819 / NCTC 11168)).